The primary structure comprises 264 residues: uncharacterized protein (264 aa).

The first 23 residues, 1-23 (MQQWNLTISNILIGLFFCFSAQA), serve as a signal peptide directing secretion.

This is an uncharacterized protein from Shewanella oneidensis (strain ATCC 700550 / JCM 31522 / CIP 106686 / LMG 19005 / NCIMB 14063 / MR-1).